The sequence spans 370 residues: Erythronate-4-phosphate dehydrogenase (370 aa).

Residues Ser45 and Thr66 each coordinate substrate. Asp142 and Thr169 together coordinate NAD(+). Arg202 is a catalytic residue. Asp228 contributes to the NAD(+) binding site. Glu233 is an active-site residue. His250 acts as the Proton donor in catalysis. Gly253 is an NAD(+) binding site. Residue Tyr254 participates in substrate binding.

This sequence belongs to the D-isomer specific 2-hydroxyacid dehydrogenase family. PdxB subfamily. As to quaternary structure, homodimer.

Its subcellular location is the cytoplasm. The enzyme catalyses 4-phospho-D-erythronate + NAD(+) = (R)-3-hydroxy-2-oxo-4-phosphooxybutanoate + NADH + H(+). Its pathway is cofactor biosynthesis; pyridoxine 5'-phosphate biosynthesis; pyridoxine 5'-phosphate from D-erythrose 4-phosphate: step 2/5. Functionally, catalyzes the oxidation of erythronate-4-phosphate to 3-hydroxy-2-oxo-4-phosphonooxybutanoate. The polypeptide is Erythronate-4-phosphate dehydrogenase (Teredinibacter turnerae (strain ATCC 39867 / T7901)).